Here is an 80-residue protein sequence, read N- to C-terminus: Translational regulator CsrA (80 aa).

This sequence belongs to the CsrA/RsmA family. In terms of assembly, homodimer; the beta-strands of each monomer intercalate to form a hydrophobic core, while the alpha-helices form wings that extend away from the core.

Its subcellular location is the cytoplasm. Its function is as follows. A translational regulator that binds mRNA to regulate translation initiation and/or mRNA stability. Usually binds in the 5'-UTR at or near the Shine-Dalgarno sequence preventing ribosome-binding, thus repressing translation. Its main target seems to be the major flagellin gene, while its function is anatagonized by FliW. The sequence is that of Translational regulator CsrA from Desulforamulus reducens (strain ATCC BAA-1160 / DSM 100696 / MI-1) (Desulfotomaculum reducens).